A 718-amino-acid chain; its full sequence is Fatty acid oxidation complex subunit alpha (718 aa).

The segment at 1–188 (MIYQGESIRV…KVGAVDAVVE (188 aa)) is enoyl-CoA hydratase/isomerase. Aspartate 295 lines the substrate pocket. Residues 310–718 (TKEIKTAGVL…KSYFDTTSAK (409 aa)) form a 3-hydroxyacyl-CoA dehydrogenase region. NAD(+) contacts are provided by residues methionine 324, aspartate 343, 400–402 (VVE), lysine 407, and serine 429. The active-site For 3-hydroxyacyl-CoA dehydrogenase activity is the histidine 450. Asparagine 453 provides a ligand contact to NAD(+). Substrate contacts are provided by asparagine 500 and tyrosine 658.

This sequence in the N-terminal section; belongs to the enoyl-CoA hydratase/isomerase family. In the C-terminal section; belongs to the 3-hydroxyacyl-CoA dehydrogenase family. As to quaternary structure, heterotetramer of two alpha chains (FadB) and two beta chains (FadA).

It carries out the reaction a (3S)-3-hydroxyacyl-CoA + NAD(+) = a 3-oxoacyl-CoA + NADH + H(+). It catalyses the reaction a (3S)-3-hydroxyacyl-CoA = a (2E)-enoyl-CoA + H2O. The enzyme catalyses a 4-saturated-(3S)-3-hydroxyacyl-CoA = a (3E)-enoyl-CoA + H2O. The catalysed reaction is (3S)-3-hydroxybutanoyl-CoA = (3R)-3-hydroxybutanoyl-CoA. It carries out the reaction a (3Z)-enoyl-CoA = a 4-saturated (2E)-enoyl-CoA. It catalyses the reaction a (3E)-enoyl-CoA = a 4-saturated (2E)-enoyl-CoA. It functions in the pathway lipid metabolism; fatty acid beta-oxidation. In terms of biological role, involved in the aerobic and anaerobic degradation of long-chain fatty acids via beta-oxidation cycle. Catalyzes the formation of 3-oxoacyl-CoA from enoyl-CoA via L-3-hydroxyacyl-CoA. It can also use D-3-hydroxyacyl-CoA and cis-3-enoyl-CoA as substrate. The polypeptide is Fatty acid oxidation complex subunit alpha (Idiomarina loihiensis (strain ATCC BAA-735 / DSM 15497 / L2-TR)).